The sequence spans 539 residues: 2,3-bisphosphoglycerate-independent phosphoglycerate mutase (539 aa).

Mn(2+)-binding residues include Asp37 and Ser86. Residue Ser86 is part of the active site. Residues His147, 177-178 (RD), Arg210, Arg216, 284-287 (RADR), and Lys359 each bind substrate. Residues Asp426, His430, Asp467, His468, and His485 each coordinate Mn(2+).

It belongs to the BPG-independent phosphoglycerate mutase family. Mg(2+) serves as cofactor. Requires Mn(2+) as cofactor. Expressed ubiquitously. High expression levels in the nerve ring region, intestine and body wall muscles.

It carries out the reaction (2R)-2-phosphoglycerate = (2R)-3-phosphoglycerate. Its pathway is carbohydrate degradation; glycolysis; pyruvate from D-glyceraldehyde 3-phosphate: step 3/5. Activity is not affected by 2,3-bisphosphoglycerate. Its function is as follows. Catalyzes the interconversion of 2-phosphoglycerate and 3-phosphoglycerate. The sequence is that of 2,3-bisphosphoglycerate-independent phosphoglycerate mutase from Caenorhabditis elegans.